Reading from the N-terminus, the 257-residue chain is Imidazole glycerol phosphate synthase subunit HisF (257 aa).

Catalysis depends on residues Asp11 and Asp130.

The protein belongs to the HisA/HisF family. In terms of assembly, heterodimer of HisH and HisF.

The protein localises to the cytoplasm. It carries out the reaction 5-[(5-phospho-1-deoxy-D-ribulos-1-ylimino)methylamino]-1-(5-phospho-beta-D-ribosyl)imidazole-4-carboxamide + L-glutamine = D-erythro-1-(imidazol-4-yl)glycerol 3-phosphate + 5-amino-1-(5-phospho-beta-D-ribosyl)imidazole-4-carboxamide + L-glutamate + H(+). The protein operates within amino-acid biosynthesis; L-histidine biosynthesis; L-histidine from 5-phospho-alpha-D-ribose 1-diphosphate: step 5/9. IGPS catalyzes the conversion of PRFAR and glutamine to IGP, AICAR and glutamate. The HisF subunit catalyzes the cyclization activity that produces IGP and AICAR from PRFAR using the ammonia provided by the HisH subunit. This chain is Imidazole glycerol phosphate synthase subunit HisF, found in Vibrio campbellii (strain ATCC BAA-1116).